Reading from the N-terminus, the 348-residue chain is Flavonol synthase/flavanone 3-hydroxylase (348 aa).

The 101-residue stretch at 209–309 (EIVYLLKINY…RMSWPVFLEP (101 aa)) folds into the Fe2OG dioxygenase domain. Fe cation is bound by residues histidine 234, aspartate 236, and histidine 290.

The protein belongs to the iron/ascorbate-dependent oxidoreductase family. Requires L-ascorbate as cofactor. It depends on Fe cation as a cofactor.

The protein resides in the cytoplasm. The enzyme catalyses a (2R,3R)-dihydroflavonol + 2-oxoglutarate + O2 = a flavonol + succinate + CO2 + H2O. It carries out the reaction a (2S)-flavan-4-one + 2-oxoglutarate + O2 = a (2R,3R)-dihydroflavonol + succinate + CO2. It functions in the pathway secondary metabolite biosynthesis; flavonoid biosynthesis. Its function is as follows. Catalyzes the formation of flavonols from dihydroflavonols. It can act on dihydrokaempferol to produce kaempferol, on dihydroquercetin to produce quercitin and on dihydromyricetin to produce myricetin. This chain is Flavonol synthase/flavanone 3-hydroxylase (FL), found in Petunia hybrida (Petunia).